Here is a 231-residue protein sequence, read N- to C-terminus: 2-C-methyl-D-erythritol 4-phosphate cytidylyltransferase (231 aa).

This sequence belongs to the IspD/TarI cytidylyltransferase family. IspD subfamily. Homodimer.

It carries out the reaction 2-C-methyl-D-erythritol 4-phosphate + CTP + H(+) = 4-CDP-2-C-methyl-D-erythritol + diphosphate. It participates in isoprenoid biosynthesis; isopentenyl diphosphate biosynthesis via DXP pathway; isopentenyl diphosphate from 1-deoxy-D-xylulose 5-phosphate: step 2/6. Functionally, catalyzes the formation of 4-diphosphocytidyl-2-C-methyl-D-erythritol from CTP and 2-C-methyl-D-erythritol 4-phosphate (MEP). This chain is 2-C-methyl-D-erythritol 4-phosphate cytidylyltransferase, found in Citrobacter koseri (strain ATCC BAA-895 / CDC 4225-83 / SGSC4696).